Consider the following 1270-residue polypeptide: Vigilin (1270 aa).

Residues 1–11 (MSSVAVLTQES) show a composition bias toward polar residues. Disordered regions lie at residues 1-23 (MSSVAVLTQESFAEHRSGLTQQQ) and 28-47 (ALNSEEENDPPTYKEAFPPL). KH domains lie at 150–188 (ASATVAIPKEHHRFVIGKNGEKLQDLELKTATKIQIPRP), 219–260 (DKRA…IPPP), 291–333 (KKKT…IPPT), 360–402 (ANSF…EFTE), 431–473 (INRT…IPPD), 504–545 (ENER…NFPD), 577–619 (VENS…LPGR), 651–693 (ANIT…FPTE), 724–766 (QTKS…FPTS), 798–840 (DNVV…LPTV), and 872–913 (EAQV…FPDR). The tract at residues 911–947 (PDREENPAPVAEPALQENGEEGGEGKDGKDADPSSPR) is disordered. The segment covering 933–947 (GEGKDGKDADPSSPR) has biased composition (basic and acidic residues). 3 KH domains span residues 970-1012 (ALVP…VPAP), 1051-1093 (ALRS…FPDK), and 1126-1168 (LEQM…FPQS). The segment at 1217–1270 (SHEESKVPSKGFVVRDAPCGTVNNEKAPDMSSSEDFPSFGAQVAPKTLPWGPKR) is disordered.

The protein localises to the cytoplasm. The protein is Vigilin (HDLBP) of Gallus gallus (Chicken).